The sequence spans 250 residues: 5-oxoprolinase subunit A (250 aa).

Belongs to the LamB/PxpA family. In terms of assembly, forms a complex composed of PxpA, PxpB and PxpC.

It catalyses the reaction 5-oxo-L-proline + ATP + 2 H2O = L-glutamate + ADP + phosphate + H(+). Functionally, catalyzes the cleavage of 5-oxoproline to form L-glutamate coupled to the hydrolysis of ATP to ADP and inorganic phosphate. The sequence is that of 5-oxoprolinase subunit A from Pseudomonas fluorescens (strain ATCC BAA-477 / NRRL B-23932 / Pf-5).